A 219-amino-acid chain; its full sequence is dTTP/UTP pyrophosphatase (219 aa).

Asp79 functions as the Proton acceptor in the catalytic mechanism.

This sequence belongs to the Maf family. YhdE subfamily. Requires a divalent metal cation as cofactor.

It localises to the cytoplasm. It carries out the reaction dTTP + H2O = dTMP + diphosphate + H(+). The enzyme catalyses UTP + H2O = UMP + diphosphate + H(+). Its function is as follows. Nucleoside triphosphate pyrophosphatase that hydrolyzes dTTP and UTP. May have a dual role in cell division arrest and in preventing the incorporation of modified nucleotides into cellular nucleic acids. This Oleidesulfovibrio alaskensis (strain ATCC BAA-1058 / DSM 17464 / G20) (Desulfovibrio alaskensis) protein is dTTP/UTP pyrophosphatase.